Here is a 301-residue protein sequence, read N- to C-terminus: Tetrahydromethanopterin S-methyltransferase subunit E (301 aa).

The next 5 helical transmembrane spans lie at 85-105 (VIFAIAIGALVASAVHGTYCI), 130-150 (HTPVMMGYAFITTFCILVVSY), 151-171 (IMVAVLAHPFPLTLLAFIWGI), 232-252 (PVTGLAFGMTVFLSGWVTAVF), and 258-278 (LTMGWLSVAAGVILVLLLIIW).

Belongs to the MtrE family. In terms of assembly, the complex is composed of 8 subunits; MtrA, MtrB, MtrC, MtrD, MtrE, MtrF, MtrG and MtrH.

Its subcellular location is the cell membrane. It carries out the reaction 5-methyl-5,6,7,8-tetrahydromethanopterin + coenzyme M + 2 Na(+)(in) = 5,6,7,8-tetrahydromethanopterin + methyl-coenzyme M + 2 Na(+)(out). Its function is as follows. Part of a complex that catalyzes the formation of methyl-coenzyme M and tetrahydromethanopterin from coenzyme M and methyl-tetrahydromethanopterin. This is an energy-conserving, sodium-ion translocating step. In Methanococcoides burtonii (strain DSM 6242 / NBRC 107633 / OCM 468 / ACE-M), this protein is Tetrahydromethanopterin S-methyltransferase subunit E.